Reading from the N-terminus, the 162-residue chain is Interleukin-15 (162 aa).

A signal peptide spans 1–29 (MRISKPHLRSISIQCYLCLLLNSHFLTEA). A propeptide spanning residues 30–48 (GIHVFILGCFSAGLPKTEA) is cleaved from the precursor. 2 disulfides stabilise this stretch: C83-C133 and C90-C136. The N-linked (GlcNAc...) asparagine glycan is linked to N127.

This sequence belongs to the IL-15/IL-21 family. In terms of tissue distribution, most abundant in placenta and skeletal muscle. It is also detected in the heart, lung, liver and kidney. IL15-S21AA is preferentially expressed in tissues such as testis and thymus.

The protein resides in the secreted. It is found in the cytoplasm. It localises to the nucleus. In terms of biological role, cytokine that plays a major role in the development of inflammatory and protective immune responses to microbial invaders and parasites by modulating immune cells of both the innate and adaptive immune systems. Stimulates the proliferation of natural killer cells, T-cells and B-cells and promotes the secretion of several cytokines. In monocytes, induces the production of IL8 and monocyte chemotactic protein 1/CCL2, two chemokines that attract neutrophils and monocytes respectively to sites of infection. Unlike most cytokines, which are secreted in soluble form, IL15 is expressed in association with its high affinity IL15RA on the surface of IL15-producing cells and delivers signals to target cells that express IL2RB and IL2RG receptor subunits. Binding to its receptor triggers the phosphorylation of JAK1 and JAK3 and the recruitment and subsequent phosphorylation of signal transducer and activator of transcription-3/STAT3 and STAT5. In mast cells, induces the rapid tyrosine phosphorylation of STAT6 and thereby controls mast cell survival and release of cytokines such as IL4. The protein is Interleukin-15 (IL15) of Homo sapiens (Human).